Consider the following 180-residue polypeptide: ATP synthase subunit delta, chloroplastic (180 aa).

Belongs to the ATPase delta chain family. F-type ATPases have 2 components, F(1) - the catalytic core - and F(0) - the membrane proton channel. F(1) has five subunits: alpha(3), beta(3), gamma(1), delta(1), epsilon(1). CF(0) has four main subunits: a(1), b(1), b'(1) and c(10-14). The alpha and beta chains form an alternating ring which encloses part of the gamma chain. F(1) is attached to F(0) by a central stalk formed by the gamma and epsilon chains, while a peripheral stalk is formed by the delta, b and b' chains.

Its subcellular location is the plastid. The protein localises to the chloroplast thylakoid membrane. Functionally, f(1)F(0) ATP synthase produces ATP from ADP in the presence of a proton or sodium gradient. F-type ATPases consist of two structural domains, F(1) containing the extramembraneous catalytic core and F(0) containing the membrane proton channel, linked together by a central stalk and a peripheral stalk. During catalysis, ATP synthesis in the catalytic domain of F(1) is coupled via a rotary mechanism of the central stalk subunits to proton translocation. This protein is part of the stalk that links CF(0) to CF(1). It either transmits conformational changes from CF(0) to CF(1) or is implicated in proton conduction. This chain is ATP synthase subunit delta, chloroplastic, found in Emiliania huxleyi (Coccolithophore).